The following is a 336-amino-acid chain: Glycerol-3-phosphate dehydrogenase [NAD(P)+] (336 aa).

NADPH-binding residues include Ser-11, Trp-12, Arg-33, Arg-34, and Lys-107. The sn-glycerol 3-phosphate site is built by Lys-107 and Gly-137. Ala-141 is an NADPH binding site. Lys-192, Asp-245, Ser-255, Arg-256, and Asn-257 together coordinate sn-glycerol 3-phosphate. Residue Lys-192 is the Proton acceptor of the active site. NADPH is bound at residue Arg-256. Glu-282 is a binding site for NADPH.

It belongs to the NAD-dependent glycerol-3-phosphate dehydrogenase family.

The protein localises to the cytoplasm. The enzyme catalyses sn-glycerol 3-phosphate + NAD(+) = dihydroxyacetone phosphate + NADH + H(+). The catalysed reaction is sn-glycerol 3-phosphate + NADP(+) = dihydroxyacetone phosphate + NADPH + H(+). The protein operates within membrane lipid metabolism; glycerophospholipid metabolism. Its function is as follows. Catalyzes the reduction of the glycolytic intermediate dihydroxyacetone phosphate (DHAP) to sn-glycerol 3-phosphate (G3P), the key precursor for phospholipid synthesis. This Thermobifida fusca (strain YX) protein is Glycerol-3-phosphate dehydrogenase [NAD(P)+].